We begin with the raw amino-acid sequence, 196 residues long: Molybdenum cofactor guanylyltransferase (196 aa).

GTP is bound by residues 10 to 12 (LAG), Lys-23, Asn-51, Asp-69, and Asp-99. Residue Asp-99 coordinates Mg(2+).

The protein belongs to the MobA family. In terms of assembly, monomer. Mg(2+) is required as a cofactor.

Its subcellular location is the cytoplasm. It carries out the reaction Mo-molybdopterin + GTP + H(+) = Mo-molybdopterin guanine dinucleotide + diphosphate. Functionally, transfers a GMP moiety from GTP to Mo-molybdopterin (Mo-MPT) cofactor (Moco or molybdenum cofactor) to form Mo-molybdopterin guanine dinucleotide (Mo-MGD) cofactor. In Shewanella sp. (strain W3-18-1), this protein is Molybdenum cofactor guanylyltransferase.